A 473-amino-acid polypeptide reads, in one-letter code: Putative amidase AmiC (473 aa).

Catalysis depends on charge relay system residues lysine 82 and serine 157. The active-site Acyl-ester intermediate is the serine 181.

It belongs to the amidase family.

The catalysed reaction is a monocarboxylic acid amide + H2O = a monocarboxylate + NH4(+). The chain is Putative amidase AmiC (amiC) from Mycobacterium bovis (strain ATCC BAA-935 / AF2122/97).